The chain runs to 760 residues: MOXD1 homolog 2 (760 aa).

Residues 1 to 34 (MAHPRKAVATPATLQLGPPAQTAQSPAATLRHSR) form a disordered region. Low complexity predominate over residues 18–34 (PPAQTAQSPAATLRHSR). The chain crosses the membrane as a helical span at residues 47 to 67 (CFISCHTFNLFLLLLLLASGV). N-linked (GlcNAc...) asparagine glycosylation is found at N78, N198, and N223. The DOMON domain occupies 117–233 (DDFRILWQII…DTMRLLYMYH (117 aa)). Cystine bridges form between C339–C367, C467–C581, and C543–C565. N668 carries N-linked (GlcNAc...) asparagine glycosylation. Positions 678–701 (RCKPKRPLAPPTERTAPPPASDLS) are disordered. The helical transmembrane segment at 740–760 (FISCLLWLGASSWWLLLMLRT) threads the bilayer.

The protein belongs to the copper type II ascorbate-dependent monooxygenase family.

It localises to the membrane. This is MOXD1 homolog 2 (olf413) from Drosophila melanogaster (Fruit fly).